Reading from the N-terminus, the 144-residue chain is Gonadotropin subunit beta-2 (144 aa).

Residues 1 to 27 form the signal peptide; the sequence is MGTPVKILVVRNHILFSVVVLLAVAQS. 6 cysteine pairs are disulfide-bonded: C33/C81, C47/C96, C50/C134, C58/C112, C62/C114, and C117/C124. N-linked (GlcNAc...) asparagine glycosylation occurs at N37. A propeptide spanning residues 143–144 is cleaved from the precursor; sequence VY.

This sequence belongs to the glycoprotein hormones subunit beta family. As to quaternary structure, heterodimer of an alpha and a beta chain.

It localises to the secreted. Its function is as follows. Involved in gametogenesis and steroidogenesis. The sequence is that of Gonadotropin subunit beta-2 (cgbb) from Cyprinus carpio (Common carp).